The chain runs to 152 residues: Lipoprotein signal peptidase (152 aa).

3 helical membrane passes run 5–25 (LFVLSLILLVALDQLSKFWIV), 61–81 (WFFVVITVLVIGYAIYYLATH), and 84–104 (LNIWKQLALLLIISGGIGNFI). Residues aspartate 114 and aspartate 130 contribute to the active site. The chain crosses the membrane as a helical span at residues 125–145 (IFNVADSYLTVGVILLLICLW).

It belongs to the peptidase A8 family.

It is found in the cell membrane. It carries out the reaction Release of signal peptides from bacterial membrane prolipoproteins. Hydrolyzes -Xaa-Yaa-Zaa-|-(S,diacylglyceryl)Cys-, in which Xaa is hydrophobic (preferably Leu), and Yaa (Ala or Ser) and Zaa (Gly or Ala) have small, neutral side chains.. The protein operates within protein modification; lipoprotein biosynthesis (signal peptide cleavage). This protein specifically catalyzes the removal of signal peptides from prolipoproteins. This chain is Lipoprotein signal peptidase, found in Streptococcus pyogenes serotype M1.